We begin with the raw amino-acid sequence, 213 residues long: Uracil phosphoribosyltransferase (213 aa).

Residues R78, R103, and 131–139 (DPMLATGGT) each bind 5-phospho-alpha-D-ribose 1-diphosphate. Residues I197 and 202 to 204 (GDA) contribute to the uracil site. Residue D203 participates in 5-phospho-alpha-D-ribose 1-diphosphate binding.

Belongs to the UPRTase family. It depends on Mg(2+) as a cofactor.

It carries out the reaction UMP + diphosphate = 5-phospho-alpha-D-ribose 1-diphosphate + uracil. It functions in the pathway pyrimidine metabolism; UMP biosynthesis via salvage pathway; UMP from uracil: step 1/1. Allosterically activated by GTP. Catalyzes the conversion of uracil and 5-phospho-alpha-D-ribose 1-diphosphate (PRPP) to UMP and diphosphate. The protein is Uracil phosphoribosyltransferase of Bifidobacterium longum (strain DJO10A).